Here is a 246-residue protein sequence, read N- to C-terminus: Bis(5'-nucleosyl)-tetraphosphatase PrpE [asymmetrical] (246 aa).

Belongs to the PrpE family. Ni(2+) serves as cofactor.

The enzyme catalyses P(1),P(4)-bis(5'-guanosyl) tetraphosphate + H2O = GMP + GTP + 2 H(+). Asymmetrically hydrolyzes Ap4p to yield AMP and ATP. This Bacillus cereus (strain AH820) protein is Bis(5'-nucleosyl)-tetraphosphatase PrpE [asymmetrical].